The following is a 579-amino-acid chain: MPLKHYLLLLVSCQAWAAGLAYYGCPSECTCSRASQVECTGAQIVAMPSPLPWNAMSLQILNTHITELPEDKFLNISALIALKMEKNELANIMPGAFRNLGSLRHLSLANNKLKNLPVRLFQDVNNLETLLLSNNQLVQIQPAQFSQFSNLKELQLYGNNLEYIPEGVFDHLVGLTKLNLGNNGFTHLSPRVFQHLGNLQVLRLYENRLSDIPMGTFDALGNLQELALQENQIGTLSPGLFHNNRNLQRLYLSNNHISHLPPGIFMQLPHLNKLTLFGNSLKELSPGVFGPMPNLRELWLYNNHITSLPDNAFSHLNQLQVLILSHNQLSYISPGAFNGLTNLRELSLHTNALQDLDGNVFRSLANLRNVSLQNNRLRQLPGSIFANVNGLMTIQLQNNNLENLPLGIFDHLGNLCELRLYDNPWRCDSNILPLHDWLILNRARLGTDTLPVCSSPASVRGQSLVIINVNFPGPSVQGPETPEVSSYPDTSSYPDSTSISSTTEITRSTDDDYTDLNTIEPIDDRNTWGMTDAQSGLAIAAIVIGIIALACSLAACICCCCCKKRSQAVLMQMKAPNEC.

Positions 1–21 (MPLKHYLLLLVSCQAWAAGLA) are cleaved as a signal peptide. An LRRNT domain is found at 22-53 (YYGCPSECTCSRASQVECTGAQIVAMPSPLPW). Residues 22–536 (YYGCPSECTC…TWGMTDAQSG (515 aa)) are Extracellular-facing. 15 LRR repeats span residues 54–75 (NAMS…KFLN), 78–99 (ALIA…AFRN), 102–123 (SLRH…LFQD), 126–147 (NLET…QFSQ), 150–171 (NLKE…VFDH), 174–195 (GLTK…VFQH), 198–219 (NLQV…TFDA), 222–243 (NLQE…LFHN), 246–267 (NLQR…IFMQ), 270–291 (HLNK…VFGP), 294–315 (NLRE…AFSH), 318–339 (QLQV…AFNG), 342–363 (NLRE…VFRS), 366–387 (NLRN…IFAN), and 390–411 (GLMT…IFDH). The N-linked (GlcNAc...) asparagine glycan is linked to N75. Residue N369 is glycosylated (N-linked (GlcNAc...) asparagine). One can recognise an LRRCT domain in the interval 423–473 (NPWRCDSNILPLHDWLILNRARLGTDTLPVCSSPASVRGQSLVIINVNFPG). Positions 476–509 (VQGPETPEVSSYPDTSSYPDSTSISSTTEITRST) are disordered. Low complexity predominate over residues 485 to 506 (SSYPDTSSYPDSTSISSTTEIT). A helical transmembrane segment spans residues 537 to 557 (LAIAAIVIGIIALACSLAACI). Residues 558–579 (CCCCCKKRSQAVLMQMKAPNEC) lie on the Cytoplasmic side of the membrane.

In terms of tissue distribution, expressed in chodrocytes (at protein level).

The protein localises to the cell membrane. The chain is Leucine-rich repeat-containing protein 15 (Lrrc15) from Mus musculus (Mouse).